A 350-amino-acid chain; its full sequence is Ceramide synthase 1 (350 aa).

Residue Ala2 is modified to N-acetylalanine. The next 6 helical transmembrane spans lie at 53–73, 103–123, 148–168, 176–196, 239–259, and 287–307; these read AHLAAPELLLAVLCALGWTAL, AWKLLFYLACWSYCAYLLLGT, IAVAYLLQGSFYCHSIYATVY, SVVMLVHHVVTLLLIASSYAF, VANLGCLSFCFCWFWFRLYWF, and LLLLLMVMNIYWFLYIVAFAA. In terms of domain architecture, TLC spans 97 to 311; the sequence is ARLPESAWKL…IVAFAAKVLT (215 aa).

Acetylated. Deacetylation by SIRT3 increases enzyme activity and promotes mitochondrial ceramide accumulation. As to expression, expressed in brain, skeletal muscle, heart and perigonadal white adipose tissue.

The protein localises to the endoplasmic reticulum membrane. The enzyme catalyses a sphingoid base + octadecanoyl-CoA = an N-octadecanoyl-sphingoid base + CoA + H(+). It carries out the reaction sphinganine + octadecanoyl-CoA = N-(octadecanoyl)-sphinganine + CoA + H(+). It catalyses the reaction hexadecasphinganine + octadecanoyl-CoA = N-octadecanoylhexadecasphinganine + CoA + H(+). The catalysed reaction is sphing-4-enine + octadecanoyl-CoA = N-octadecanoylsphing-4-enine + CoA + H(+). The enzyme catalyses heptadecasphing-4-enine + octadecanoyl-CoA = N-octadecanoyl-heptadecasphing-4-enine + CoA + H(+). It carries out the reaction 2-hydroxyoctadecanoyl-CoA + sphinganine = N-(2-hydroxyoctadecanoyl)-sphinganine + CoA + H(+). It catalyses the reaction eicosanoyl-CoA + sphinganine = N-eicosanoylsphinganine + CoA + H(+). It participates in lipid metabolism; sphingolipid metabolism. With respect to regulation, inhibited by fumonisin B1. Ceramide synthase that catalyzes the transfer of the acyl chain from acyl-CoA to a sphingoid base, with high selectivity toward stearoyl-CoA (octadecanoyl-CoA; C18:0-CoA). N-acylates sphinganine and sphingosine bases to form dihydroceramides and ceramides in de novo synthesis and salvage pathways, respectively. Plays a predominant role in skeletal muscle in regulating C18 ceramide and dihydroceramide levels with an impact on whole-body glucose metabolism and insulin sensitivity. Protects from diet-induced obesity by suppressing the uptake of glucose in multiple organs in a FGF21-dependent way. Generates C18 ceramides in the brain, playing a critical role in cerebellar development and Purkinje cell function. In response to cellular stress mediates mitophagy, a known defense mechanism against cell transformation and aging. Upon mitochondria fission, generates C18 ceramides that anchor lipidated MAP1LC3B/LC3B-II autophagolysosomes to outer mitochondrial membranes to eliminate damaged mitochondria. The protein is Ceramide synthase 1 of Mus musculus (Mouse).